Here is a 105-residue protein sequence, read N- to C-terminus: Flowering-promoting factor 1-like protein 5 (105 aa).

Belongs to the FPF1 family.

The chain is Flowering-promoting factor 1-like protein 5 from Oryza sativa subsp. japonica (Rice).